Consider the following 326-residue polypeptide: Protein C10 (326 aa).

The protein belongs to the poxviridae C4/C10 protein family.

In Homo sapiens (Human), this protein is Protein C10.